Here is a 156-residue protein sequence, read N- to C-terminus: ATP synthase subunit b (156 aa).

A helical transmembrane segment spans residues 7–27 (LIGQTVAFIIFVWFCMKFVWP).

The protein belongs to the ATPase B chain family. In terms of assembly, F-type ATPases have 2 components, F(1) - the catalytic core - and F(0) - the membrane proton channel. F(1) has five subunits: alpha(3), beta(3), gamma(1), delta(1), epsilon(1). F(0) has three main subunits: a(1), b(2) and c(10-14). The alpha and beta chains form an alternating ring which encloses part of the gamma chain. F(1) is attached to F(0) by a central stalk formed by the gamma and epsilon chains, while a peripheral stalk is formed by the delta and b chains.

It localises to the cell inner membrane. Functionally, f(1)F(0) ATP synthase produces ATP from ADP in the presence of a proton or sodium gradient. F-type ATPases consist of two structural domains, F(1) containing the extramembraneous catalytic core and F(0) containing the membrane proton channel, linked together by a central stalk and a peripheral stalk. During catalysis, ATP synthesis in the catalytic domain of F(1) is coupled via a rotary mechanism of the central stalk subunits to proton translocation. Component of the F(0) channel, it forms part of the peripheral stalk, linking F(1) to F(0). The sequence is that of ATP synthase subunit b from Shewanella oneidensis (strain ATCC 700550 / JCM 31522 / CIP 106686 / LMG 19005 / NCIMB 14063 / MR-1).